The sequence spans 412 residues: Gamma-glutamyl phosphate reductase (412 aa).

It belongs to the gamma-glutamyl phosphate reductase family.

The protein resides in the cytoplasm. The catalysed reaction is L-glutamate 5-semialdehyde + phosphate + NADP(+) = L-glutamyl 5-phosphate + NADPH + H(+). Its pathway is amino-acid biosynthesis; L-proline biosynthesis; L-glutamate 5-semialdehyde from L-glutamate: step 2/2. Functionally, catalyzes the NADPH-dependent reduction of L-glutamate 5-phosphate into L-glutamate 5-semialdehyde and phosphate. The product spontaneously undergoes cyclization to form 1-pyrroline-5-carboxylate. The polypeptide is Gamma-glutamyl phosphate reductase (Nitratiruptor sp. (strain SB155-2)).